Consider the following 64-residue polypeptide: Large ribosomal subunit protein bL33 (64 aa).

The protein belongs to the bacterial ribosomal protein bL33 family.

This chain is Large ribosomal subunit protein bL33, found in Synechococcus sp. (strain JA-2-3B'a(2-13)) (Cyanobacteria bacterium Yellowstone B-Prime).